Here is a 1070-residue protein sequence, read N- to C-terminus: DNA-directed RNA polymerase subunit beta (1070 aa).

Belongs to the RNA polymerase beta chain family. As to quaternary structure, in plastids the minimal PEP RNA polymerase catalytic core is composed of four subunits: alpha, beta, beta', and beta''. When a (nuclear-encoded) sigma factor is associated with the core the holoenzyme is formed, which can initiate transcription.

It is found in the plastid. The protein localises to the chloroplast. It catalyses the reaction RNA(n) + a ribonucleoside 5'-triphosphate = RNA(n+1) + diphosphate. Functionally, DNA-dependent RNA polymerase catalyzes the transcription of DNA into RNA using the four ribonucleoside triphosphates as substrates. In Solanum bulbocastanum (Wild potato), this protein is DNA-directed RNA polymerase subunit beta.